The following is a 631-amino-acid chain: tRNA uridine 5-carboxymethylaminomethyl modification enzyme MnmG (631 aa).

Residues 13 to 18, Val-125, and Ser-180 each bind FAD; that span reads GGGHAG. 273–287 is a binding site for NAD(+); it reads GPRYCPSIEDKVMRF. Position 370 (Gln-370) interacts with FAD.

It belongs to the MnmG family. Homodimer. Heterotetramer of two MnmE and two MnmG subunits. Requires FAD as cofactor.

The protein localises to the cytoplasm. Its function is as follows. NAD-binding protein involved in the addition of a carboxymethylaminomethyl (cmnm) group at the wobble position (U34) of certain tRNAs, forming tRNA-cmnm(5)s(2)U34. The polypeptide is tRNA uridine 5-carboxymethylaminomethyl modification enzyme MnmG (Vibrio campbellii (strain ATCC BAA-1116)).